A 499-amino-acid chain; its full sequence is MSILYEERLDGALPDVDRTSVLMALREHVPGLEILHTDEEIIPYECDGLSAYRTRPLLVVLPKQMEQVTAILAVCHRLRVPVVTRGAGTGLSGGALPLEKGVLLVMARFKEILDINPVGRRARVQPGVRNLAISQAVAPHNLYYAPDPSSQIACSIGGNVAENAGGVHCLKYGLTVHNLLKIEVQTLDGEALTLGSDALDSPGFDLLALFTGSEGMLGVTTEVTVKLLPKPPVARVLLASFDSVEKAGLAVGDIIANGIIPGGLEMMDNLSIRAAEDFIHAGYPVDAEAILLCELDGVESDVQEDCERVNDILLKAGATDVRLAQDEAERVRFWAGRKNAFPAVGRISPDYYCMDGTIPRRALPGVLEGIARLSQQYDLRVANVFHAGDGNMHPLILFDANEPGEFARAEELGGKILELCVEVGGSISGEHGIGREKINQMCAQFNSDEITTFHAVKAAFDPDGLLNPGKNIPTLHRCAEFGAMHVHHGHLPFPELERF.

Residues Tyr-52–Lys-230 form the FAD-binding PCMH-type domain.

It belongs to the FAD-binding oxidoreductase/transferase type 4 family. The glycolate oxidase likely consists of three subunits, GlcD, GlcE and GlcF. FAD serves as cofactor.

It localises to the cell inner membrane. It catalyses the reaction glycolate + A = glyoxylate + AH2. It carries out the reaction (R)-lactate + A = pyruvate + AH2. In terms of biological role, component of a complex that catalyzes the oxidation of glycolate to glyoxylate. Is required for E.coli to grow on glycolate as a sole source of carbon. Is also able to oxidize D-lactate ((R)-lactate) with a similar rate. Does not link directly to O(2), and 2,6-dichloroindophenol (DCIP) and phenazine methosulfate (PMS) can act as artificial electron acceptors in vitro, but the physiological molecule that functions as a primary electron acceptor during glycolate oxidation is unknown. The polypeptide is Glycolate oxidase subunit GlcD (glcD) (Escherichia coli O6:H1 (strain CFT073 / ATCC 700928 / UPEC)).